The primary structure comprises 443 residues: F-box only protein 39 (443 aa).

Residues 13–59 (QSCWATLPDVCLRRVFWWLGDRDRSRAALVCRKWNQIMYSADLWRYR) form the F-box domain.

In terms of assembly, directly interacts with SKP1 and CUL1.

Functionally, substrate-recognition component of the SCF (SKP1-CUL1-F-box protein)-type E3 ubiquitin ligase complex. The chain is F-box only protein 39 (Fbxo39) from Mus musculus (Mouse).